The sequence spans 277 residues: uncharacterized protein (277 aa).

The first 25 residues, methionine 1–alanine 25, serve as a signal peptide directing secretion. Cysteine 26 is lipidated: N-palmitoyl cysteine. The S-diacylglycerol cysteine moiety is linked to residue cysteine 26.

The protein belongs to the MG439/MG440 family.

It is found in the cell membrane. This is an uncharacterized protein from Mycoplasma pneumoniae (strain ATCC 29342 / M129 / Subtype 1) (Mycoplasmoides pneumoniae).